Consider the following 311-residue polypeptide: Pantothenate synthetase (311 aa).

43 to 50 (MGALHEGH) provides a ligand contact to ATP. The active-site Proton donor is the His-50. Gln-75 contacts (R)-pantoate. Beta-alanine is bound at residue Gln-75. 161-164 (GEKD) serves as a coordination point for ATP. Residue Gln-167 participates in (R)-pantoate binding. Residues Val-190 and 198 to 201 (MSSR) contribute to the ATP site.

This sequence belongs to the pantothenate synthetase family. In terms of assembly, homodimer.

The protein resides in the cytoplasm. It catalyses the reaction (R)-pantoate + beta-alanine + ATP = (R)-pantothenate + AMP + diphosphate + H(+). It functions in the pathway cofactor biosynthesis; (R)-pantothenate biosynthesis; (R)-pantothenate from (R)-pantoate and beta-alanine: step 1/1. Catalyzes the condensation of pantoate with beta-alanine in an ATP-dependent reaction via a pantoyl-adenylate intermediate. In Mycolicibacterium vanbaalenii (strain DSM 7251 / JCM 13017 / BCRC 16820 / KCTC 9966 / NRRL B-24157 / PYR-1) (Mycobacterium vanbaalenii), this protein is Pantothenate synthetase.